A 331-amino-acid chain; its full sequence is Cathepsin 7 (331 aa).

A signal peptide spans 1 to 17 (MTPTVFLSILCLGVALA). The propeptide at 18–111 (APAPDYNLDA…GKHIQKRNPK (94 aa)) is activation peptide. A Nuclear localization signal motif is present at residues 33 to 50 (KRSNDRTYSPEEEKQRRA). N-linked (GlcNAc...) asparagine glycosylation occurs at Asn-72. Intrachain disulfides connect Cys-133–Cys-176, Cys-167–Cys-209, and Cys-267–Cys-320. Residue Cys-136 is part of the active site. Residues His-274 and Asn-298 contribute to the active site.

It belongs to the peptidase C1 family. As to expression, expressed in placenta. Expressed in parietal and spiral artery-associated trophoblast giant cells, most abundantly during the phase of trophoblast invasion. From 14.5 dpc onwards, expressed at lower levels in labyrinth trophoblast cells. Expressed in trophoblast stem cells. Expressed in heart, liver and testis.

It localises to the endosome. Its subcellular location is the lysosome. It is found in the cytoplasm. The protein resides in the perinuclear region. The protein localises to the golgi apparatus. It localises to the nucleus. Its subcellular location is the secreted. It is found in the extracellular space. Its function is as follows. Involved in trophoblast cell proliferation and differentiation probably by affecting mitotic cell cycle progression. Proteolytic activity and nuclear localization are essential for its role in cell cycle progression. The polypeptide is Cathepsin 7 (Mus musculus (Mouse)).